Consider the following 314-residue polypeptide: Formimidoylglutamase (314 aa).

The Mn(2+) site is built by His127, Asp151, His153, Asp155, Asp239, and Asp241.

The protein belongs to the arginase family. Mn(2+) serves as cofactor.

The enzyme catalyses N-formimidoyl-L-glutamate + H2O = formamide + L-glutamate. The protein operates within amino-acid degradation; L-histidine degradation into L-glutamate; L-glutamate from N-formimidoyl-L-glutamate (hydrolase route): step 1/1. Functionally, catalyzes the conversion of N-formimidoyl-L-glutamate to L-glutamate and formamide. The chain is Formimidoylglutamase from Corynebacterium efficiens (strain DSM 44549 / YS-314 / AJ 12310 / JCM 11189 / NBRC 100395).